Reading from the N-terminus, the 200-residue chain is uncharacterized protein (200 aa).

This is an uncharacterized protein from Methanocaldococcus jannaschii (strain ATCC 43067 / DSM 2661 / JAL-1 / JCM 10045 / NBRC 100440) (Methanococcus jannaschii).